The following is a 158-amino-acid chain: Cyclic pyranopterin monophosphate synthase (158 aa).

Substrate contacts are provided by residues 74–76 (MCH) and 112–113 (ME). The active site involves Asp127.

The protein belongs to the MoaC family. In terms of assembly, homohexamer; trimer of dimers.

The enzyme catalyses (8S)-3',8-cyclo-7,8-dihydroguanosine 5'-triphosphate = cyclic pyranopterin phosphate + diphosphate. The protein operates within cofactor biosynthesis; molybdopterin biosynthesis. Functionally, catalyzes the conversion of (8S)-3',8-cyclo-7,8-dihydroguanosine 5'-triphosphate to cyclic pyranopterin monophosphate (cPMP). The polypeptide is Cyclic pyranopterin monophosphate synthase (Helicobacter pylori (strain HPAG1)).